The sequence spans 585 residues: Arginine--tRNA ligase (585 aa).

The 'HIGH' region motif lies at 126 to 136; that stretch reads PNIAKEMHVGH.

This sequence belongs to the class-I aminoacyl-tRNA synthetase family. Monomer.

Its subcellular location is the cytoplasm. The catalysed reaction is tRNA(Arg) + L-arginine + ATP = L-arginyl-tRNA(Arg) + AMP + diphosphate. In Rippkaea orientalis (strain PCC 8801 / RF-1) (Cyanothece sp. (strain PCC 8801)), this protein is Arginine--tRNA ligase.